Here is a 75-residue protein sequence, read N- to C-terminus: DNA-directed RNA polymerase subunit omega (75 aa).

It belongs to the RNA polymerase subunit omega family. In terms of assembly, in cyanobacteria the RNAP catalytic core is composed of 2 alpha, 1 beta, 1 beta', 1 gamma and 1 omega subunit. When a sigma factor is associated with the core the holoenzyme is formed, which can initiate transcription.

The enzyme catalyses RNA(n) + a ribonucleoside 5'-triphosphate = RNA(n+1) + diphosphate. In terms of biological role, promotes RNA polymerase assembly. Latches the N- and C-terminal regions of the beta' subunit thereby facilitating its interaction with the beta and alpha subunits. This chain is DNA-directed RNA polymerase subunit omega, found in Synechococcus sp. (strain WH7803).